A 787-amino-acid chain; its full sequence is Integrin beta-6 (787 aa).

The N-terminal stretch at 1–21 (MGIELLCLFFLFLGRNDHVQG) is a signal peptide. One can recognise a PSI domain in the interval 22–71 (GCAMGGAETCEDCLLIGPQCAWCSQENFTHLSGVGERCDTPANLLAKGCQ). Residues 22-708 (GCAMGGAETC…KDCPKPPNIP (687 aa)) lie on the Extracellular side of the membrane. Disulfide bonds link C23-C41, C31-C454, C34-C59, C44-C70, C197-C204, C252-C293, C394-C406, C426-C452, C456-C476, C467-C479, C481-C490, C492-C519, C502-C517, C511-C522, C524-C537, C539-C560, C544-C558, C552-C563, and C565-C574. 2 N-linked (GlcNAc...) asparagine glycosylation sites follow: N48 and N97. The region spanning 131–371 (YPVDLYYLMD…QLIISAYEEL (241 aa)) is the VWFA domain. Residues D140, S142, and S144 each contribute to the Mg(2+) site. Ca(2+) is bound by residues S144, D147, D148, and E179. Positions 235, 237, 239, and 240 each coordinate Ca(2+). Mg(2+) is bound at residue E240. N260 carries an N-linked (GlcNAc...) asparagine glycan. Residues D271 and K355 each coordinate Ca(2+). A glycan (N-linked (GlcNAc...) asparagine) is linked at N387. N418 is a glycosylation site (N-linked (GlcNAc...) asparagine). I-EGF domains lie at 456-491 (CQKE…HHCE), 492-538 (CGED…PYCQ), 539-575 (CDNF…EYCN), and 576-615 (CTTS…PACE). Residues N463 and N471 are each glycosylated (N-linked (GlcNAc...) asparagine). The N-linked (GlcNAc...) asparagine glycan is linked to N541. Residue N575 is glycosylated (N-linked (GlcNAc...) asparagine). 9 disulfide bridges follow: C576-C599, C583-C597, C591-C602, C604-C614, C617-C620, C624-C670, C630-C649, C633-C645, and C678-C701. The chain crosses the membrane as a helical span at residues 709-729 (MIMLGVSLAILLIGVALLCIW). An interaction with HAX1 region spans residues 730–757 (KLLVSFHDRKEVAKFEAERSKAKWQTGT). The Cytoplasmic portion of the chain corresponds to 730-787 (KLLVSFHDRKEVAKFEAERSKAKWQTGTNPLYRGSTSTFKNVTYKHKEKQKVDLSTDG).

It belongs to the integrin beta chain family. As to quaternary structure, heterodimer of an alpha and a beta subunit. Interacts with FLNB. Interacts with HAX1. ITGAV:ITGB6 interacts with FBN1. ITGAV:ITGB6 interacts with TGFB1.

Its subcellular location is the cell membrane. The protein resides in the cell junction. It localises to the focal adhesion. Functionally, integrin alpha-V:beta-6 (ITGAV:ITGB6) is a receptor for fibronectin and cytotactin. It recognizes the sequence R-G-D in its ligands. ITGAV:ITGB6 acts as a receptor for fibrillin-1 (FBN1) and mediates R-G-D-dependent cell adhesion to FBN1. Integrin alpha-V:beta-6 (ITGAV:ITGB6) mediates R-G-D-dependent release of transforming growth factor beta-1 (TGF-beta-1) from regulatory Latency-associated peptide (LAP), thereby playing a key role in TGF-beta-1 activation. The sequence is that of Integrin beta-6 (ITGB6) from Ovis aries (Sheep).